Reading from the N-terminus, the 462-residue chain is Hemopexin (462 aa).

The first 23 residues, 1-23, serve as a signal peptide directing secretion; it reads MARVLGAPVALGLWSLCWSLAIA. Residues Thr24 and Thr29 are each glycosylated (O-linked (GalNAc...) threonine). Positions 29 to 48 are disordered; it reads TSAHGNVAEGETKPDPDVTE. The tract at residues 30 to 40 is O-glycosylated at one site; that stretch reads SAHGNVAEGET. A compositionally biased stretch (basic and acidic residues) spans 38-48; sequence GETKPDPDVTE. Intrachain disulfides connect Cys50–Cys231, Cys149–Cys154, and Cys188–Cys200. Hemopexin repeat units follow at residues 53-93, 94-139, 140-184, and 185-231; these read GWSF…WKNF, PSPV…FPGI, PSPL…SWPA, and VGNC…FMPC. A glycan (N-linked (GlcNAc...) (complex) asparagine) is linked at Asn64. His79 contacts heme. A heme-binding site is contributed by His150. Asn187 carries N-linked (GlcNAc...) (complex) asparagine glycosylation. His236 contacts heme. 2 N-linked (GlcNAc...) asparagine glycosylation sites follow: Asn240 and Asn246. 3 disulfides stabilise this stretch: Cys257/Cys460, Cys366/Cys408, and Cys418/Cys435. Hemopexin repeat units follow at residues 259–304, 305–352, 357–396, and 400–450; these read PHLV…WPQG, PSAV…VGTP, LDSV…WTEL, and HEKV…ALPQ. His293 contacts heme. Asn453 is a glycosylation site (N-linked (GlcNAc...) (complex) asparagine).

The protein belongs to the hemopexin family. As to quaternary structure, interacts with FLVCR1. In terms of assembly, (Microbial infection) Interacts with hepatitis E virus/HEV protein ORF3. Post-translationally, N- and O-glycosylated. O-glycosylated with core 1 or possibly core 8 glycans. O-glycosylation in the 30-40 region is minor compared to glycosylation at Thr-24 and Thr-29. Expressed by the liver and secreted in plasma.

The protein resides in the secreted. Functionally, binds heme and transports it to the liver for breakdown and iron recovery, after which the free hemopexin returns to the circulation. The sequence is that of Hemopexin (HPX) from Homo sapiens (Human).